A 175-amino-acid chain; its full sequence is MTKVNSQKYSKALLEVAQEKGQLEAILSEVSEMIQLFKEDNLVAFLSSEVYSFSAKSELIDTLLQTSSEVMSNFLNTVRSNGRLGDLGEILDETKNAADDMFKIADVGVVSSIALTNAQIEKFTAMAKAKFDLNEVTVINTVNEKILGGFIVNSRGKIIDASLKTQLAKIAAEIL.

It belongs to the ATPase delta chain family. As to quaternary structure, F-type ATPases have 2 components, F(1) - the catalytic core - and F(0) - the membrane proton channel. F(1) has five subunits: alpha(3), beta(3), gamma(1), delta(1), epsilon(1). F(0) has three main subunits: a(1), b(2) and c(10-14). The alpha and beta chains form an alternating ring which encloses part of the gamma chain. F(1) is attached to F(0) by a central stalk formed by the gamma and epsilon chains, while a peripheral stalk is formed by the delta and b chains.

It localises to the cell membrane. In terms of biological role, f(1)F(0) ATP synthase produces ATP from ADP in the presence of a proton or sodium gradient. F-type ATPases consist of two structural domains, F(1) containing the extramembraneous catalytic core and F(0) containing the membrane proton channel, linked together by a central stalk and a peripheral stalk. During catalysis, ATP synthesis in the catalytic domain of F(1) is coupled via a rotary mechanism of the central stalk subunits to proton translocation. This protein is part of the stalk that links CF(0) to CF(1). It either transmits conformational changes from CF(0) to CF(1) or is implicated in proton conduction. This is ATP synthase subunit delta from Lactococcus lactis subsp. lactis (strain IL1403) (Streptococcus lactis).